The chain runs to 296 residues: Uracil phosphoribosyltransferase, chloroplastic (296 aa).

A chloroplast-targeting transit peptide spans 1–61 (MACSIGNAFR…SSSLSRRTIR (61 aa)). A2 carries the N-acetylalanine modification. 148 to 151 (REPI) contacts GTP. 5-phospho-alpha-D-ribose 1-diphosphate contacts are provided by residues R158, R183, D211, 216 to 219 (TGGT), and D282. 281-283 (GDA) serves as a coordination point for uracil.

Belongs to the UPRTase family. Requires Mg(2+) as cofactor.

It is found in the plastid. It localises to the chloroplast. The enzyme catalyses UMP + diphosphate = 5-phospho-alpha-D-ribose 1-diphosphate + uracil. The protein operates within pyrimidine metabolism; UMP biosynthesis via salvage pathway; UMP from uracil: step 1/1. Allosterically activated by GTP. Uracil phosphoribosyltransferase (UPRT) that catalyzes the conversion of uracil and 5-phospho-alpha-D-ribose 1-diphosphate (PRPP) to UMP and diphosphate. Is probably the only functional UPRT, since the dual-domain proteins of the UKL family seem to lack this activity. The sequence is that of Uracil phosphoribosyltransferase, chloroplastic (UPP) from Arabidopsis thaliana (Mouse-ear cress).